We begin with the raw amino-acid sequence, 2512 residues long: Probable polyketide synthase 5 (2512 aa).

The Ketosynthase family 3 (KS3) domain maps to 17–447 (MKGVAIVGIG…GSNCCLLISE (431 aa)). Catalysis depends on for beta-ketoacyl synthase activity residues C187, H329, and H368. Residues 638–671 (GVNPSFILGHSLGEIPTSYCSGMIDLDTFCYTVY) are acyl/malonyl transferase. S648 acts as the For acyl/malonyl transferase activity in catalysis. Positions 928–1050 (IDHLGLSNSY…ANFQLLDHTI (123 aa)) are N-terminal hotdog fold. Positions 928 to 1210 (IDHLGLSNSY…SKSLIPIKEL (283 aa)) constitute a PKS/mFAS DH domain. H962 (proton acceptor; for dehydratase activity) is an active-site residue. A C-terminal hotdog fold region spans residues 1067 to 1210 (TLARLTKNEI…SKSLIPIKEL (144 aa)). Catalysis depends on D1125, which acts as the Proton donor; for dehydratase activity. The 78-residue stretch at 2430 to 2507 (AGSKNVDELF…VSIKIILNFL (78 aa)) folds into the Carrier domain. S2467 carries the O-(pantetheine 4'-phosphoryl)serine modification.

The cofactor is pantetheine 4'-phosphate.

Probable polyketide synthase. The protein is Probable polyketide synthase 5 (pks5) of Dictyostelium discoideum (Social amoeba).